A 461-amino-acid polypeptide reads, in one-letter code: Coronin-1A (461 aa).

N-acetylserine is present on S2. At S2 the chain carries Phosphoserine; by PKC. 7 WD repeats span residues 13–63 (HVFG…LVLP), 73–110 (NAPTVCGHTAPVLDIAWCPHNDNVIASGSEDCTVMVWE), 123–160 (PVVTLEGHTKRVGIVAWHTTAQNVLLSAGCDNVIMVWD), 164–204 (GAAM…RIIE), 207–251 (KGTV…ALWD), 258–296 (PLSLQELDTSSGVLLPFFDPDTNIVYLCGKGDSSIRYFE), and 302–349 (PFLH…EPIA). The segment covering 403 to 418 (ELRVNRGLDTGRRRAA) has biased composition (basic and acidic residues). Residues 403 to 432 (ELRVNRGLDTGRRRAAPEASGTPSSDAVSR) form a disordered region. A Phosphothreonine; by PKC modification is found at T412. Residue S422 is modified to Phosphoserine. Positions 424 to 460 (TPSSDAVSRLEEEMRKLQATVQELQKRLDRLEETVQA) form a coiled coil. At K449 the chain carries N6-acetyllysine.

Belongs to the WD repeat coronin family. As to quaternary structure, binds actin. Post-translationally, phosphorylation at Thr-412 by PKC strongly down-regulates the association with actin. Polyubiquitinated by RNF128 with 'Lys-48'-linked chains, leading to proteasomal degradation. As to expression, expressed in brain, thymus, spleen, bone marrow and lymph node. Low in lung and gut.

Its subcellular location is the cytoplasm. The protein resides in the cytoskeleton. It localises to the cell cortex. It is found in the cytoplasmic vesicle. The protein localises to the phagosome membrane. In terms of biological role, may be a crucial component of the cytoskeleton of highly motile cells, functioning both in the invagination of large pieces of plasma membrane, as well as in forming protrusions of the plasma membrane involved in cell locomotion. In mycobacteria-infected cells, its retention on the phagosomal membrane prevents fusion between phagosomes and lysosomes. The chain is Coronin-1A (CORO1A) from Homo sapiens (Human).